The following is a 605-amino-acid chain: Kelch-like protein 41b (605 aa).

The BTB domain maps to 32–102 (VDCTLKIGDR…YSAEIDLVDD (71 aa)). A BACK domain is found at 136–238 (CLAVFRLGLV…PEKYFREKVE (103 aa)). 5 Kelch repeats span residues 345-397 (QLFI…ESEN), 398-446 (LLFA…SHNN), 447-494 (LVYC…VHKG), 496-541 (IIVT…SSGG), and 543-598 (LFSI…MRLN).

The protein resides in the cytoplasm. It localises to the cytoskeleton. The protein localises to the sarcoplasmic reticulum membrane. Its subcellular location is the endoplasmic reticulum membrane. Involved in skeletal muscle development and maintenance. This is Kelch-like protein 41b from Danio rerio (Zebrafish).